Consider the following 1406-residue polypeptide: DNA-directed RNA polymerase subunit beta' (1406 aa).

Positions 70, 72, 85, and 88 each coordinate Zn(2+). Mg(2+)-binding residues include Asp-460, Asp-462, and Asp-464. Zn(2+)-binding residues include Cys-814, Cys-889, Cys-896, and Cys-899.

Belongs to the RNA polymerase beta' chain family. As to quaternary structure, the RNAP catalytic core consists of 2 alpha, 1 beta, 1 beta' and 1 omega subunit. When a sigma factor is associated with the core the holoenzyme is formed, which can initiate transcription. Mg(2+) is required as a cofactor. Zn(2+) serves as cofactor.

It carries out the reaction RNA(n) + a ribonucleoside 5'-triphosphate = RNA(n+1) + diphosphate. In terms of biological role, DNA-dependent RNA polymerase catalyzes the transcription of DNA into RNA using the four ribonucleoside triphosphates as substrates. This is DNA-directed RNA polymerase subunit beta' from Stenotrophomonas maltophilia (strain K279a).